Consider the following 964-residue polypeptide: Reticulon-3 (964 aa).

Low complexity predominate over residues 1–24 (MAESSAATQSPSVSSSSSGAEPSA). Disordered regions lie at residues 1-32 (MAES…GGSP), 68-109 (AGLS…SETL), and 179-200 (WVVK…DRSA). At A2 the chain carries N-acetylalanine. Over 2–795 (AESSAATQSP…KKTGFVFGTT (794 aa)) the chain is Cytoplasmic. Phosphoserine is present on S31. Positions 80-91 (SKSMTSSFLSSS) are enriched in low complexity. Phosphoserine occurs at positions 217, 225, 230, 233, 270, 303, and 429. The tract at residues 479-536 (ITEKPDSLPSAAAKTSEREIKETPSRETVRSEMCENSEQPQAQPETPTQKSLEGEVAS) is disordered. Basic and acidic residues predominate over residues 493–511 (TSEREIKETPSRETVRSEM). Residues 516–527 (EQPQAQPETPTQ) show a composition bias toward low complexity. S529 is subject to Phosphoserine. A Phosphothreonine modification is found at T593. A phosphoserine mark is found at S596, S597, and S673. Disordered stretches follow at residues 645 to 674 (ELSG…TMSP) and 697 to 723 (VQDE…SSSD). Residues 712–723 (FAPQSGPQSSSD) are compositionally biased toward polar residues. The Reticulon domain occupies 776-964 (VHDLIFWRDV…LPGIAKKKAE (189 aa)). The segment at residues 796–819 (LIMLLSLAAFSVISVVSYLILALL) is an intramembrane region (helical). Topologically, residues 820-876 (SVTISFRVYKSVIQAVQKSEEGHPFKAYLDVDITLSSEAFHNYMNAAMVHVNKALKL) are cytoplasmic. Positions 877 to 899 (IIRLFLVEDLVDSLKLAVFMWLM) form an intramembrane region, helical. Residues 900 to 903 (TYVG) are Cytoplasmic-facing. Positions 904–926 (AVFNGITLLILAELLVFSVPIVY) form an intramembrane region, helical. Residues 919 to 964 (VFSVPIVYEKYKTQIDHYVGIARDQTKSIVEKIQAKLPGIAKKKAE) are interaction with FADD. Residues 927-964 (EKYKTQIDHYVGIARDQTKSIVEKIQAKLPGIAKKKAE) lie on the Cytoplasmic side of the membrane. The interaction with BACE1 stretch occupies residues 932-934 (QID).

Homodimer. Interacts with RTN4. Isoform 3 interacts with BACE1, BACE2, BCL2 and FADD. Interacts with ATL1 and ATL2. Isoform 3 interacts with TMEM33. Interacts with ZFYVE27 and with KIF5A in a ZFYVE27-dependent manner. Interacts with RIGI. Interacts with TRIM25. As to expression, isoform 1, isoform 3, isoform 4 and isoform 5 are expressed in spinal cord. Isoform 1 is present in brain, where it is expressed in the neurons of cerebral cortex, hippocampus, hypothalamus and cerebellum (at protein level).

Its subcellular location is the endoplasmic reticulum membrane. The protein resides in the golgi apparatus membrane. Functionally, may be involved in membrane trafficking in the early secretory pathway. Inhibits BACE1 activity and amyloid precursor protein processing. May induce caspase-8 cascade and apoptosis. May favor BCL2 translocation to the mitochondria upon endoplasmic reticulum stress. Induces the formation of endoplasmic reticulum tubules. Also acts as an inflammation-resolving regulator by interacting with both TRIM25 and RIGI, subsequently impairing RIGI 'Lys-63'-linked polyubiquitination leading to IRF3 and NF-kappa-B inhibition. In Mus musculus (Mouse), this protein is Reticulon-3 (Rtn3).